The following is a 445-amino-acid chain: UDP-glucuronic acid decarboxylase 2 (445 aa).

The residue at position 2 (Ala2) is an N-acetylalanine. At 2 to 43 (ASELINRRHETDQPTADAYYPKPIKPWFTVTRPMRYMLREQR) the chain is on the cytoplasmic side. A helical; Signal-anchor for type II membrane protein membrane pass occupies residues 44–64 (LIFVLVGIAIATLVFTIFPRS). The Lumenal portion of the chain corresponds to 65 to 445 (TQSTPYSDPF…AATTTKTTSA (381 aa)). 149–174 (DNFFTGRKENVMHHFSNPNFEMIRHD) contributes to the NAD(+) binding site. Substrate is bound at residue Arg258. Tyr261 functions as the Proton acceptor in the catalytic mechanism. 261–265 (YDEGK) lines the NAD(+) pocket. Asn290 is a substrate binding site. An NAD(+)-binding site is contributed by Arg302. Residues 303-307 (VVSNF), 320-327 (YGDGKQTR), and 387-391 (DPHKR) each bind substrate.

It belongs to the NAD(P)-dependent epimerase/dehydratase family. UDP-glucuronic acid decarboxylase subfamily. Homodimer. Requires NAD(+) as cofactor. As to expression, ubiquitous.

The protein localises to the golgi apparatus. It localises to the golgi stack membrane. It carries out the reaction UDP-alpha-D-glucuronate + H(+) = UDP-alpha-D-xylose + CO2. The protein operates within nucleotide-sugar biosynthesis; UDP-alpha-D-xylose biosynthesis; UDP-alpha-D-xylose from UDP-alpha-D-glucuronate: step 1/1. Its function is as follows. Catalyzes the NAD-dependent decarboxylation of UDP-glucuronic acid to UDP-xylose. Necessary for the biosynthesis of the core tetrasaccharide in glycosaminoglycan biosynthesis. The protein is UDP-glucuronic acid decarboxylase 2 (UXS2) of Arabidopsis thaliana (Mouse-ear cress).